The primary structure comprises 494 residues: MTSLVPGAGLLPIPTSSPLTAVSSLGVSLSSLGAIPAAALDPNITTLGEIPQPPLMGNVDPSKIDEIRRTVYVGNLNSQTTTADQLLEFFKQVGEVKFVRMAGDETQPTRFAFVEFADQNSVPRALAFNGVMFGDRPLKINHSNNAIVKPPEMTPQAAAKELEEVMKRVREAQSFISAAIEPESGKSNERKGGRSRSHTRSKSRSSSKSHSRRKRSQSKHRSRSHNRSRSRQKDRRRSKSPHKKRSKSRERRKSRSRSRSRDKRKDTREKVKERVKEKEREKEREREKDREKDKERGKNKDKDREKEKDHEKERDKEKEKEQDKDKEREKDRSKETDEKRKKEKKSRTPPRSYNASRRSRSTSRERRRRRSRSSSRSPRTSKTVKRKSSRSPSPRGRNKKEKKREKERDHISDRRERERSTSTKKSSGDRDGKEKVEKSTTPVKEKEHSKESDATVSKAADEKGSPRTEDEGKVQHNGNCQPNEESPCSKADAV.

Residues 69–145 (RTVYVGNLNS…RPLKINHSNN (77 aa)) enclose the RRM domain. Residues serine 174 and serine 187 each carry the phosphoserine modification. Residues 176-494 (ISAAIEPESG…ESPCSKADAV (319 aa)) form a disordered region. A compositionally biased stretch (basic and acidic residues) spans 183–192 (ESGKSNERKG). Residues 193 to 262 (GRSRSHTRSK…KSRSRSRSRD (70 aa)) are compositionally biased toward basic residues. Residues 263–340 (KRKDTREKVK…DRSKETDEKR (78 aa)) are compositionally biased toward basic and acidic residues. Phosphothreonine is present on threonine 348. The span at 357 to 373 (RRSRSTSRERRRRRSRS) shows a compositional bias: basic residues. The span at 404–474 (REKERDHISD…SPRTEDEGKV (71 aa)) shows a compositional bias: basic and acidic residues. Positions 476-486 (HNGNCQPNEES) are enriched in polar residues. Lysine 490 is covalently cross-linked (Glycyl lysine isopeptide (Lys-Gly) (interchain with G-Cter in SUMO2)).

It belongs to the splicing factor SR family. Homodimer. Binds SFRS1, SFRS2, SFRS3 and SFRS6. Interacts with the spliceosome. Interacts with SREK1IP1.

The protein resides in the nucleus. Participates in the regulation of alternative splicing by modulating the activity of other splice facors. Inhibits the splicing activity of SFRS1, SFRS2 and SFRS6. Augments the splicing activity of SFRS3. This Mus musculus (Mouse) protein is Splicing regulatory glutamine/lysine-rich protein 1 (Srek1).